We begin with the raw amino-acid sequence, 1123 residues long: MKKRIRSSYKVGSSNKYHKKNYTDNEKDKKKYRSYKEKHINEKMFDKKEFLNFLTNFNKKFMKKNSLVDHLMKMNDKAEDNYDGYNSSGSRYNNINDDGVELCGTKRYTNNKNNSDYDNYNNNNNMKNKRYSNKKHNNDNIIINNNNNKYTDERKYRNKSIKEDVDYTNDYYNIQLNNNKINNNQTKNKIDTIRNISHEKLGNNKSSSARNLSLIQTSHIPYDAPLADFLENGRFLRTFENISLIGQGGFGSVYKVSHRLEPGSPTYAVKFIYLKVSSLDNVSSRRYFREIAANRDIYSKHVVRYYTWWCEEPQFLPMHLMPKEIQNLVKKNKDTFKKRLTKNKKYSNNCISDSSNNNNSSCYSASSYNSSINSNYRNMKLWIKKKEQSPDMKRYKEVLRKNNAPNLVFYSDNDGLTSKNKENPEKNHNPFLSDKNFSDSIYKKKKSHDYNSSSHKLKKRKNKKKKSKKKRKSKSKIKTNAQGIYEESENDEGRDHFQYKKGKEQFSKFIGKLILWVLHKVSKNMILLIMVILSEEDRDLIVFADNEESNGNDQQMIRHDNMNNENVIIKHRNEDDKNGLDGDKNGLDGDKNGLDGDKNGLDGDKNELDDNKNELDDLLMKQKINSLTRNDIVNIENENPAPHATNNIKNKKVDLNGELTYYDYVGKNEVIPNSRTETNVESINTNGMFNNKFSVMKDEGGEYKKKENMTWGDTKRDGLYENGKHEKDGLGVNKCITNKYIENDDDDDDDDDDNNNNNNIDERKKDLKKKQKNAITKGNEDLLATNGTNNKEKRKKDDDINKNMEKIKSYKKKTPVPEFSIVLLLQMELCKGYTLRKWLDRSTRSDKPLHFTYSDKKMNHPLEFDLFKQLIKGLKDIHATCFIHRDLKPENIFVDNDTYTLKIGDLGLVRFIEEKKREKDFNNIDCYKDNIYTDINQNRITSQISIKGQIIGTPGYTAPEGGALCDEKADIYSAALILLELLCPRFTTIMERYKRLNDFRNYYTVPDYVKIHLNPWYILMLQMSKPNPADRPSAADVYSKIKVLLDPHLTDFAFSFNDIHNEHMNKPPQGTNNFERITDNKDKFVIQSVVDMKNKVENEEIPIEKGLNSNVENIKNENNGADK.

Residues 1–30 (MKKRIRSSYKVGSSNKYHKKNYTDNEKDKK) are disordered. The span at 21 to 30 (NYTDNEKDKK) shows a compositional bias: basic and acidic residues. ATP is bound by residues 245–253 (IGQGGFGSV) and Lys-270. 3 disordered regions span residues 409 to 493 (FYSD…NDEG), 572 to 609 (RNEDDKNGLDGDKNGLDGDKNGLDGDKNGLDGDKNELD), and 742 to 800 (ENDD…DDDI). The span at 419–428 (KNKENPEKNH) shows a compositional bias: basic and acidic residues. Residues 455–477 (HKLKKRKNKKKKSKKKRKSKSKI) are compositionally biased toward basic residues. A run of 5 repeats spans residues 576–582 (DKNGLDG), 583–589 (DKNGLDG), 590–596 (DKNGLDG), 597–603 (DKNGLDG), and 604–610 (DKNELDD). The interval 576–610 (DKNGLDGDKNGLDGDKNGLDGDKNGLDGDKNELDD) is 5 X 7 AA tandem repeat of D-K-N-[GE]-L-D-[GD]. Positions 678-1049 (TNVESINTNG…KIKVLLDPHL (372 aa)) constitute a Protein kinase domain. A compositionally biased stretch (acidic residues) spans 743–754 (NDDDDDDDDDDN). The active-site Proton acceptor is the Asp-886. Thr-953 bears the Phosphothreonine mark.

The protein belongs to the protein kinase superfamily. Ser/Thr protein kinase family. GCN2 subfamily. In terms of assembly, may form oligomers in response to stress; oligomerization may result in catalytic activity. Interacts with BIP; the interaction is disrupted in response to stress. In terms of processing, auto-phosphorylated.

It is found in the endoplasmic reticulum membrane. The catalysed reaction is L-seryl-[protein] + ATP = O-phospho-L-seryl-[protein] + ADP + H(+). The enzyme catalyses L-threonyl-[protein] + ATP = O-phospho-L-threonyl-[protein] + ADP + H(+). Its activity is regulated as follows. Dissociation from BIP and oligomerization, may results autophosphorylation and kinase activity induction. In terms of biological role, during the asexual blood stage, phosphorylates translation factor eIF2alpha in late schizonts resulting in protein translation inhibition. Plays a role in trophozoite differentiation into schizonts. In Plasmodium falciparum, this protein is Eukaryotic translation initiation factor 2-alpha kinase PK4.